Consider the following 514-residue polypeptide: Glucose-6-phosphate 1-dehydrogenase 2 (514 aa).

NADP(+)-binding residues include Arg-69 and Lys-176. His-206, Lys-210, Glu-244, and Asp-263 together coordinate substrate. The Proton acceptor role is filled by His-268. Residue Lys-366 participates in substrate binding.

Belongs to the glucose-6-phosphate dehydrogenase family.

It catalyses the reaction D-glucose 6-phosphate + NADP(+) = 6-phospho-D-glucono-1,5-lactone + NADPH + H(+). Its pathway is carbohydrate degradation; pentose phosphate pathway; D-ribulose 5-phosphate from D-glucose 6-phosphate (oxidative stage): step 1/3. Its function is as follows. Catalyzes the oxidation of glucose 6-phosphate to 6-phosphogluconolactone. The chain is Glucose-6-phosphate 1-dehydrogenase 2 from Mycobacterium bovis (strain ATCC BAA-935 / AF2122/97).